The sequence spans 316 residues: tRNA dimethylallyltransferase (316 aa).

17 to 24 lines the ATP pocket; sequence GPTASGKT. 19 to 24 is a binding site for substrate; sequence TASGKT. Interaction with substrate tRNA regions lie at residues 42-45, 166-170, and 247-252; these read DSAL, QRLSR, and RCVGYR.

This sequence belongs to the IPP transferase family. In terms of assembly, monomer. Mg(2+) is required as a cofactor.

The catalysed reaction is adenosine(37) in tRNA + dimethylallyl diphosphate = N(6)-dimethylallyladenosine(37) in tRNA + diphosphate. Catalyzes the transfer of a dimethylallyl group onto the adenine at position 37 in tRNAs that read codons beginning with uridine, leading to the formation of N6-(dimethylallyl)adenosine (i(6)A). The polypeptide is tRNA dimethylallyltransferase (Salmonella paratyphi A (strain ATCC 9150 / SARB42)).